The chain runs to 328 residues: Tetraacyldisaccharide 4'-kinase (328 aa).

55–62 (TAGGNGKT) contacts ATP.

Belongs to the LpxK family.

The catalysed reaction is a lipid A disaccharide + ATP = a lipid IVA + ADP + H(+). It functions in the pathway glycolipid biosynthesis; lipid IV(A) biosynthesis; lipid IV(A) from (3R)-3-hydroxytetradecanoyl-[acyl-carrier-protein] and UDP-N-acetyl-alpha-D-glucosamine: step 6/6. Its function is as follows. Transfers the gamma-phosphate of ATP to the 4'-position of a tetraacyldisaccharide 1-phosphate intermediate (termed DS-1-P) to form tetraacyldisaccharide 1,4'-bis-phosphate (lipid IVA). The sequence is that of Tetraacyldisaccharide 4'-kinase from Shigella boydii serotype 4 (strain Sb227).